The chain runs to 239 residues: LexA repressor (239 aa).

A DNA-binding region (H-T-H motif) is located at residues 26 to 46 (FDEMKDALDLKSKSGIHRLIT). Catalysis depends on for autocatalytic cleavage activity residues serine 160 and lysine 198.

Belongs to the peptidase S24 family. Homodimer.

The catalysed reaction is Hydrolysis of Ala-|-Gly bond in repressor LexA.. In terms of biological role, represses a number of genes involved in the response to DNA damage (SOS response), including recA and lexA. In the presence of single-stranded DNA, RecA interacts with LexA causing an autocatalytic cleavage which disrupts the DNA-binding part of LexA, leading to derepression of the SOS regulon and eventually DNA repair. In Methylobacterium sp. (strain 4-46), this protein is LexA repressor.